A 198-amino-acid polypeptide reads, in one-letter code: Recombination protein RecR (198 aa).

The C4-type zinc-finger motif lies at 57 to 72; that stretch reads CSVCGHITDTDPCYIC. A Toprim domain is found at 80 to 175; that stretch reads SMICVVEETK…KVTRLAHGLP (96 aa).

Belongs to the RecR family.

Its function is as follows. May play a role in DNA repair. It seems to be involved in an RecBC-independent recombinational process of DNA repair. It may act with RecF and RecO. This Macrococcus caseolyticus (strain JCSC5402) (Macrococcoides caseolyticum) protein is Recombination protein RecR.